The primary structure comprises 513 residues: GMP synthase [glutamine-hydrolyzing] (513 aa).

Residues 8 to 198 (MILVLDFGSQ…VFGVCDCDGK (191 aa)) enclose the Glutamine amidotransferase type-1 domain. Residue Cys85 is the Nucleophile of the active site. Residues His172 and Glu174 contribute to the active site. The GMPS ATP-PPase domain maps to 199-388 (WSMENFIEIE…LGIPDDIVWR (190 aa)). Residue 226–232 (SGGVDSS) coordinates ATP.

In terms of assembly, homodimer.

The enzyme catalyses XMP + L-glutamine + ATP + H2O = GMP + L-glutamate + AMP + diphosphate + 2 H(+). Its pathway is purine metabolism; GMP biosynthesis; GMP from XMP (L-Gln route): step 1/1. Its function is as follows. Catalyzes the synthesis of GMP from XMP. The chain is GMP synthase [glutamine-hydrolyzing] from Bacillus pumilus (strain SAFR-032).